We begin with the raw amino-acid sequence, 425 residues long: Enolase (425 aa).

Gln162 is a binding site for (2R)-2-phosphoglycerate. The active-site Proton donor is Glu204. The Mg(2+) site is built by Asp241, Glu284, and Asp311. (2R)-2-phosphoglycerate contacts are provided by Lys336, Arg365, Ser366, and Lys387. Lys336 acts as the Proton acceptor in catalysis.

Belongs to the enolase family. The cofactor is Mg(2+).

The protein resides in the cytoplasm. It localises to the secreted. The protein localises to the cell surface. The catalysed reaction is (2R)-2-phosphoglycerate = phosphoenolpyruvate + H2O. It functions in the pathway carbohydrate degradation; glycolysis; pyruvate from D-glyceraldehyde 3-phosphate: step 4/5. Functionally, catalyzes the reversible conversion of 2-phosphoglycerate (2-PG) into phosphoenolpyruvate (PEP). It is essential for the degradation of carbohydrates via glycolysis. This is Enolase from Brucella ovis (strain ATCC 25840 / 63/290 / NCTC 10512).